The primary structure comprises 359 residues: Peptide chain release factor 1 (359 aa).

An N5-methylglutamine modification is found at glutamine 236.

Belongs to the prokaryotic/mitochondrial release factor family. Post-translationally, methylated by PrmC. Methylation increases the termination efficiency of RF1.

It is found in the cytoplasm. Its function is as follows. Peptide chain release factor 1 directs the termination of translation in response to the peptide chain termination codons UAG and UAA. The polypeptide is Peptide chain release factor 1 (Streptococcus pyogenes serotype M1).